The chain runs to 143 residues: Transcriptional regulator SlyA (143 aa).

The HTH marR-type domain occupies 2-135 (ESTLGSDLAR…LSGLIDKLER (134 aa)). A DNA-binding region (H-T-H motif) is located at residues 49 to 72 (QIQLAKAIGIEQPSLVRTLDQLEE).

This sequence belongs to the SlyA family. As to quaternary structure, homodimer.

In terms of biological role, transcription regulator that can specifically activate or repress expression of target genes. This Yersinia enterocolitica serotype O:8 / biotype 1B (strain NCTC 13174 / 8081) protein is Transcriptional regulator SlyA.